A 569-amino-acid chain; its full sequence is ATP-dependent RNA helicase HAS1 (569 aa).

Disordered stretches follow at residues 1-57 (MSKG…DQNF) and 71-110 (FKEE…FEDL). Residues 34–45 (EEEISSDEEEAD) show a composition bias toward acidic residues. Basic and acidic residues predominate over residues 71 to 85 (FKEEKKQKKNKEPKT). A Q motif motif is present at residues 105–133 (DKFEDLGLSEPTMRAIKDMGFEKMTKVQE). Residues 136 to 312 (IPPLLAGRDV…RISLRAGPLY (177 aa)) form the Helicase ATP-binding domain. 149-156 (AKTGSGKT) provides a ligand contact to ATP. Residues 259 to 262 (DEAD) carry the DEAD box motif. The Helicase C-terminal domain maps to 326–496 (GLEQGYVTCD…NIQSQLTKLI (171 aa)).

Belongs to the DEAD box helicase family. DDX18/HAS1 subfamily. Associates in the nucleolus with the 60S and pre-60S ribosomal subunits.

The protein localises to the nucleus. Its subcellular location is the nucleolus. The catalysed reaction is ATP + H2O = ADP + phosphate + H(+). Its function is as follows. ATP-dependent RNA helicase involved in 40S ribosomal subunit biogenesis. Required for the processing and cleavage of 35S pre-rRNA at sites A0, A1, and A2, leading to mature 18S rRNA. The polypeptide is ATP-dependent RNA helicase HAS1 (HAS1) (Meyerozyma guilliermondii (strain ATCC 6260 / CBS 566 / DSM 6381 / JCM 1539 / NBRC 10279 / NRRL Y-324) (Yeast)).